Here is a 702-residue protein sequence, read N- to C-terminus: Lipase maturation factor 2 (702 aa).

10 helical membrane-spanning segments follow: residues 10 to 30 (LFLQGVAAVYLFAFASLYTQI), 75 to 95 (AQGLDLLTLLGTVLALGALLL), 102 to 122 (FIYLLLWAAYLSACQVGQVFL), 123 to 143 (YFQWDSLLLETGFLAILVAPL), 164 to 184 (DLPFWLVRWLLFRLMFASGVV), 226 to 246 (LSVVATFLIEIAVPPLFFAPI), 259 to 279 (LLQILIIITGNYNFFNLLTLV), 316 to 336 (LMLELTVYGLLAYGTIYYFGL), 363 to 383 (VTLPTVWLGTASLAWELLIAL), and 396 to 416 (FFAGIQLSVLGTATVFLFLIS). The N-linked (GlcNAc...) asparagine glycan is linked to Asn-488. The helical transmembrane segment at 628–648 (QLSPLEPSILLWGLLGAVVAI) threads the bilayer. The disordered stretch occupies residues 660 to 702 (LQSSKQTREEKRKQAPKKDSRAVSEQTAPNSNSNGSWAPRRKK). Over residues 665-681 (QTREEKRKQAPKKDSRA) the composition is skewed to basic and acidic residues. A compositionally biased stretch (polar residues) spans 682–695 (VSEQTAPNSNSNGS).

Belongs to the lipase maturation factor family.

The protein localises to the endoplasmic reticulum membrane. Involved in the maturation of specific proteins in the endoplasmic reticulum. May be required for maturation and transport of active lipoprotein lipase (LPL) through the secretory pathway. This is Lipase maturation factor 2 (Lmf2) from Rattus norvegicus (Rat).